A 493-amino-acid polypeptide reads, in one-letter code: Probable cytosol aminopeptidase (493 aa).

Residues Lys258 and Asp263 each coordinate Mn(2+). Lys270 is a catalytic residue. 3 residues coordinate Mn(2+): Asp281, Asp340, and Glu342. Arg344 is a catalytic residue.

The protein belongs to the peptidase M17 family. It depends on Mn(2+) as a cofactor.

The protein resides in the cytoplasm. It catalyses the reaction Release of an N-terminal amino acid, Xaa-|-Yaa-, in which Xaa is preferably Leu, but may be other amino acids including Pro although not Arg or Lys, and Yaa may be Pro. Amino acid amides and methyl esters are also readily hydrolyzed, but rates on arylamides are exceedingly low.. The enzyme catalyses Release of an N-terminal amino acid, preferentially leucine, but not glutamic or aspartic acids.. Presumably involved in the processing and regular turnover of intracellular proteins. Catalyzes the removal of unsubstituted N-terminal amino acids from various peptides. This Caulobacter vibrioides (strain ATCC 19089 / CIP 103742 / CB 15) (Caulobacter crescentus) protein is Probable cytosol aminopeptidase.